Here is a 248-residue protein sequence, read N- to C-terminus: UPF0736 protein ABC2536 (248 aa).

Belongs to the UPF0736 family.

In Shouchella clausii (strain KSM-K16) (Alkalihalobacillus clausii), this protein is UPF0736 protein ABC2536.